The sequence spans 330 residues: Mas-related G-protein coupled receptor member X2 (330 aa).

Over 1–33 the chain is Extracellular; that stretch reads MDPTTPAWGNESTTMNGNDQALPLLCGKETLIP. A helical membrane pass occupies residues 34 to 54; it reads VFLILFIALVGLVGNGFVLWL. Residues 55–63 are Cytoplasmic-facing; the sequence is LGFCMRRNA. A helical membrane pass occupies residues 64–84; sequence FSVYVLSLAGADFLFLCFQLI. Residues 85-96 lie on the Extracellular side of the membrane; that stretch reads NCLVYLSNFFCS. Residues 97–117 traverse the membrane as a helical segment; that stretch reads ISIDFPSFFTTVMTCAYLAGL. Residues 118 to 144 lie on the Cytoplasmic side of the membrane; sequence SMLSTISTERCLSVLWPIWYRCRRPRH. The helical transmembrane segment at 145–165 threads the bilayer; that stretch reads LSAVVCVLLWALSLLLSILEG. Topologically, residues 166–184 are extracellular; it reads KFCGFFFSDGDSGWCQTFD. The chain crosses the membrane as a helical span at residues 185–205; the sequence is FITAAWLIFLFMVLCGSSLAL. The Cytoplasmic segment spans residues 206–228; that stretch reads LVRILCGSRGLPLTRLYLTILLT. Residues 229–249 traverse the membrane as a helical segment; that stretch reads VLVFLLCGLPFGIQWFLILWI. The Extracellular segment spans residues 250–264; the sequence is WENSDVLFCHIHPVS. The chain crosses the membrane as a helical span at residues 265–285; the sequence is VVLSSLNSSANPIIYFFVGTF. Topologically, residues 286–330 are cytoplasmic; it reads RKQWRLQQPILKLALQRALQDTAEVDHSEGCFRQGTPEMSRSSLV.

This sequence belongs to the G-protein coupled receptor 1 family. Mas subfamily.

The protein localises to the cell membrane. Mast cell-specific receptor for basic secretagogues, i.e. cationic amphiphilic drugs, as well as endo- or exogenous peptides, consisting of a basic head group and a hydrophobic core. Recognizes and binds small molecules containing a cyclized tetrahydroisoquinoline (THIQ), such as non-steroidal neuromuscular blocking drugs (NMBDs), including tubocurarine and atracurium. In response to these compounds, mediates pseudo-allergic reactions characterized by histamine release, inflammation and airway contraction. The polypeptide is Mas-related G-protein coupled receptor member X2 (MRGPRX2) (Pongo pygmaeus (Bornean orangutan)).